The sequence spans 214 residues: Scytalone dehydratase-like protein mdpB (214 aa).

Residues Tyr-40 and Tyr-60 each contribute to the substrate site. Active-site residues include His-95 and His-120.

Belongs to the scytalone dehydratase family.

It functions in the pathway secondary metabolite biosynthesis. In terms of biological role, scytalone dehydratase-like protein; part of the gene cluster that mediates the biosynthesis of monodictyphenone, a prenyl xanthone derivative. The pathway begins with the synthesis of atrochrysone thioester by the polyketide synthase (PKS) mdpG. The atrochrysone carboxyl ACP thioesterase mdpF then breaks the thioester bond and releases the atrochrysone carboxylic acid from mdpG. The atrochrysone carboxylic acid is then converted to atrochrysone which is further transformed into emodin anthrone. The next step is performed by the anthrone oxygenase mdpH that catalyzes the oxidation of emodinanthrone to emodin. Emodin is further modified to yield monodictyphenone via several steps involving mdpB, mdpC mdpJ, mdpK and mdpL. These enzymes with xptA, xptB and xptC are also proposed to be involved in the synthesis of shamixanthone from emodin. Especially, direct reduction of emodin by the short chain dehydrogenase mdpC followed by dehydration catalyzed by the scytalone dehydratase-like protein mdpB gives loss of oxygen and formation of chrysophanol intermediate in two simple steps. This chain is Scytalone dehydratase-like protein mdpB, found in Emericella nidulans (strain FGSC A4 / ATCC 38163 / CBS 112.46 / NRRL 194 / M139) (Aspergillus nidulans).